Reading from the N-terminus, the 233-residue chain is Large ribosomal subunit protein uL1 (233 aa).

The protein belongs to the universal ribosomal protein uL1 family. As to quaternary structure, part of the 50S ribosomal subunit.

Its function is as follows. Binds directly to 23S rRNA. The L1 stalk is quite mobile in the ribosome, and is involved in E site tRNA release. Protein L1 is also a translational repressor protein, it controls the translation of the L11 operon by binding to its mRNA. This is Large ribosomal subunit protein uL1 from Brucella suis (strain ATCC 23445 / NCTC 10510).